The sequence spans 354 residues: UDP-N-acetylglucosamine--N-acetylmuramyl-(pentapeptide) pyrophosphoryl-undecaprenol N-acetylglucosamine transferase (354 aa).

UDP-N-acetyl-alpha-D-glucosamine-binding positions include 11–13, arginine 164, serine 194, and glutamine 289; that span reads TAG.

Belongs to the glycosyltransferase 28 family. MurG subfamily.

It localises to the cell membrane. The enzyme catalyses di-trans,octa-cis-undecaprenyl diphospho-N-acetyl-alpha-D-muramoyl-L-alanyl-D-glutamyl-meso-2,6-diaminopimeloyl-D-alanyl-D-alanine + UDP-N-acetyl-alpha-D-glucosamine = di-trans,octa-cis-undecaprenyl diphospho-[N-acetyl-alpha-D-glucosaminyl-(1-&gt;4)]-N-acetyl-alpha-D-muramoyl-L-alanyl-D-glutamyl-meso-2,6-diaminopimeloyl-D-alanyl-D-alanine + UDP + H(+). It functions in the pathway cell wall biogenesis; peptidoglycan biosynthesis. Its function is as follows. Cell wall formation. Catalyzes the transfer of a GlcNAc subunit on undecaprenyl-pyrophosphoryl-MurNAc-pentapeptide (lipid intermediate I) to form undecaprenyl-pyrophosphoryl-MurNAc-(pentapeptide)GlcNAc (lipid intermediate II). The protein is UDP-N-acetylglucosamine--N-acetylmuramyl-(pentapeptide) pyrophosphoryl-undecaprenol N-acetylglucosamine transferase of Clostridium botulinum (strain ATCC 19397 / Type A).